A 185-amino-acid polypeptide reads, in one-letter code: Large ribosomal subunit protein uL6 (185 aa).

Belongs to the universal ribosomal protein uL6 family. Part of the 50S ribosomal subunit.

Its function is as follows. This protein binds to the 23S rRNA, and is important in its secondary structure. It is located near the subunit interface in the base of the L7/L12 stalk, and near the tRNA binding site of the peptidyltransferase center. In Staphylothermus marinus (strain ATCC 43588 / DSM 3639 / JCM 9404 / F1), this protein is Large ribosomal subunit protein uL6.